The following is a 100-amino-acid chain: Large ribosomal subunit protein bL21 (100 aa).

It belongs to the bacterial ribosomal protein bL21 family. As to quaternary structure, part of the 50S ribosomal subunit. Contacts protein L20.

This protein binds to 23S rRNA in the presence of protein L20. The protein is Large ribosomal subunit protein bL21 of Corynebacterium kroppenstedtii (strain DSM 44385 / JCM 11950 / CIP 105744 / CCUG 35717).